A 651-amino-acid chain; its full sequence is Far upstream element-binding protein 1 (651 aa).

Disordered stretches follow at residues 1 to 24 and 40 to 92; these read MADY…GVVN and KIGG…HQQQ. Ala2 carries the post-translational modification N-acetylalanine. 2 positions are modified to phosphoserine: Ser48 and Ser51. Over residues 61–73 the composition is skewed to basic and acidic residues; that stretch reads RPLEDGDQPDAKK. 3 consecutive KH domains span residues 96-160, 181-247, and 271-335; these read VMTE…KRLL, NAVQ…KEMV, and NEGI…AEII. Phosphoserine is present on Ser136. A Phosphothreonine modification is found at Thr149. Omega-N-methylarginine is present on residues Arg317, Arg355, Arg357, and Arg359. The 68-residue stretch at 372–439 folds into the KH 4 domain; sequence LQEFNFIVPT…QQIDYARQLI (68 aa). A Phosphoserine modification is found at Ser411. Position 428 is a phosphothreonine (Thr428). Disordered regions lie at residues 443–528, 545–574, and 625–651; these read IGGP…GADP, AQPP…APAG, and TSPQ…HHLY. Residues 464 to 501 show a composition bias toward pro residues; it reads PHGPPGPPGPGTPMGPYNPAPYNPGPPGPAPHGPPAPY. 2 stretches are compositionally biased toward low complexity: residues 514-528 and 552-574; these read QQQA…GADP and PAGA…APAG. Ser626 is modified (phosphoserine).

Found in a complex with PUF60 and far upstream element (FUSE) DNA segment. Interacts with PUF60 and JTV1. Post-translationally, ubiquitinated. This targets the protein for proteasome-mediated degradation.

Its subcellular location is the nucleus. In terms of biological role, regulates MYC expression by binding to a single-stranded far-upstream element (FUSE) upstream of the MYC promoter. May act both as activator and repressor of transcription. The chain is Far upstream element-binding protein 1 (Fubp1) from Mus musculus (Mouse).